We begin with the raw amino-acid sequence, 39 residues long: Large ribosomal subunit protein bL36 (39 aa).

The protein belongs to the bacterial ribosomal protein bL36 family.

In Oenococcus oeni (strain ATCC BAA-331 / PSU-1), this protein is Large ribosomal subunit protein bL36.